Here is a 220-residue protein sequence, read N- to C-terminus: Large ribosomal subunit protein uL3 (220 aa).

Residues glycine 137–serine 159 are disordered.

It belongs to the universal ribosomal protein uL3 family. As to quaternary structure, part of the 50S ribosomal subunit. Forms a cluster with proteins L14 and L19.

In terms of biological role, one of the primary rRNA binding proteins, it binds directly near the 3'-end of the 23S rRNA, where it nucleates assembly of the 50S subunit. This Renibacterium salmoninarum (strain ATCC 33209 / DSM 20767 / JCM 11484 / NBRC 15589 / NCIMB 2235) protein is Large ribosomal subunit protein uL3.